The following is a 577-amino-acid chain: E3 ubiquitin-protein ligase MSL2 (577 aa).

Residues 1-116 form a sufficient for interaction with MSL1 region; sequence MNPVNATALY…CEYITQTTLA (116 aa). 8 residues coordinate Zn(2+): cysteine 44, cysteine 47, cysteine 62, histidine 64, cysteine 67, cysteine 70, cysteine 81, and cysteine 84. The RING-type zinc-finger motif lies at 44 to 85; it reads CCVCGHLLQDPIAPTNSTCQHYVCKTCKGKKMMMKPSCSWCK. Residue lysine 375 forms a Glycyl lysine isopeptide (Lys-Gly) (interchain with G-Cter in SUMO2) linkage. The tract at residues 405–428 is disordered; that stretch reads TKSMKKSHEHGSKKSHSKSKPGIL. Basic residues predominate over residues 407 to 423; the sequence is SMKKSHEHGSKKSHSKS. Serine 447 bears the Phosphoserine mark. Positions 457–508 constitute a CXC MSL2-type domain; that stretch reads QEKKGCKCGRATQNPSVLTCRGQRCPCYSNRKACLDCICRGCQNSYMANGEK. Zn(2+) is bound by residues cysteine 462, cysteine 464, cysteine 476, cysteine 481, cysteine 483, cysteine 490, cysteine 493, cysteine 495, and cysteine 498.

It belongs to the MSL2 family. In terms of assembly, component of a multisubunit histone acetyltransferase complex (MSL) at least composed of the KAT8/MOF/MYST1, MSL1/hampin, MSL2 and MSL3. Forms a MSL heterotetrameric core with MSL1.

The protein resides in the nucleus. It localises to the chromosome. It carries out the reaction S-ubiquitinyl-[E2 ubiquitin-conjugating enzyme]-L-cysteine + [acceptor protein]-L-lysine = [E2 ubiquitin-conjugating enzyme]-L-cysteine + N(6)-ubiquitinyl-[acceptor protein]-L-lysine.. It functions in the pathway protein modification; protein ubiquitination. In terms of biological role, non-catalytic component of the MSL histone acetyltransferase complex, a multiprotein complex that mediates the majority of histone H4 acetylation at 'Lys-16' (H4K16ac), an epigenetic mark that prevents chromatin compaction. The MSL complex is required for chromosome stability and genome integrity by maintaining homeostatic levels of H4K16ac. The MSL complex is also involved in gene dosage by promoting up-regulation of genes expressed by the X chromosome. X up-regulation is required to compensate for autosomal biallelic expression. The MSL complex also participates in gene dosage compensation by promoting expression of Tsix non-coding RNA. MSL2 plays a key role in gene dosage by ensuring biallelic expression of a subset of dosage-sensitive genes, including many haploinsufficient genes. Acts by promoting promoter-enhancer contacts, thereby preventing DNA methylation of one allele and creating a methylation-free environment for methylation-sensitive transcription factors such as SP1, KANSL1 and KANSL3. Also acts as an E3 ubiquitin ligase that promotes monoubiquitination of histone H2B at 'Lys-35' (H2BK34Ub), but not that of H2A. This activity is greatly enhanced by heterodimerization with MSL1. H2B ubiquitination in turn stimulates histone H3 methylation at 'Lys-4' (H3K4me) and 'Lys-79' (H3K79me) and leads to gene activation, including that of HOXA9 and MEIS1. This Mus musculus (Mouse) protein is E3 ubiquitin-protein ligase MSL2.